The primary structure comprises 426 residues: D-tagatose-1,6-bisphosphate aldolase subunit KbaZ (426 aa).

Belongs to the GatZ/KbaZ family. KbaZ subfamily. Forms a complex with KbaY.

Its pathway is carbohydrate metabolism; D-tagatose 6-phosphate degradation; D-glyceraldehyde 3-phosphate and glycerone phosphate from D-tagatose 6-phosphate: step 2/2. Its function is as follows. Component of the tagatose-1,6-bisphosphate aldolase KbaYZ that is required for full activity and stability of the Y subunit. Could have a chaperone-like function for the proper and stable folding of KbaY. When expressed alone, KbaZ does not show any aldolase activity. This Escherichia coli O127:H6 (strain E2348/69 / EPEC) protein is D-tagatose-1,6-bisphosphate aldolase subunit KbaZ.